We begin with the raw amino-acid sequence, 466 residues long: UPF0652 protein C16A11.03c (466 aa).

It belongs to the UPF0652 family.

The protein resides in the cytoplasm. It is found in the nucleus. This Schizosaccharomyces pombe (strain 972 / ATCC 24843) (Fission yeast) protein is UPF0652 protein C16A11.03c.